Here is an 878-residue protein sequence, read N- to C-terminus: Microtubule-associated protein homolog maph-1.1 (878 aa).

Disordered stretches follow at residues 224 to 425 (ALSD…AQAT) and 456 to 518 (EIPP…PVVP). 4 stretches are compositionally biased toward low complexity: residues 241-268 (PSARPATTTGTATRPTRPAVPAASAPRA), 278-293 (SRPTTTRNAAPAPRTA), 310-321 (APTRAPVPARSA), and 328-339 (APAKPAANTAKA). Basic and acidic residues-rich tracts occupy residues 416 to 425 (PPRHEVAQAT) and 480 to 496 (EEDKIPEPVDAFKKPDP).

It belongs to the MAP1A/MAP1B/MAP1S family. Interacts with dlg-1.

Its subcellular location is the cell projection. The protein resides in the dendrite. It is found in the perikaryon. It localises to the axon. The protein localises to the cytoplasm. Its subcellular location is the cytoskeleton. The sequence is that of Microtubule-associated protein homolog maph-1.1 from Caenorhabditis elegans.